Consider the following 484-residue polypeptide: Glutamate--tRNA ligase (484 aa).

A 'HIGH' region motif is present at residues 11–21 (PSPTGYLHIGN). A 'KMSKS' region motif is present at residues 252 to 256 (KLSKR). Position 255 (Lys255) interacts with ATP.

This sequence belongs to the class-I aminoacyl-tRNA synthetase family. Glutamate--tRNA ligase type 1 subfamily. Monomer.

The protein resides in the cytoplasm. The catalysed reaction is tRNA(Glu) + L-glutamate + ATP = L-glutamyl-tRNA(Glu) + AMP + diphosphate. In terms of biological role, catalyzes the attachment of glutamate to tRNA(Glu) in a two-step reaction: glutamate is first activated by ATP to form Glu-AMP and then transferred to the acceptor end of tRNA(Glu). This chain is Glutamate--tRNA ligase, found in Staphylococcus epidermidis (strain ATCC 35984 / DSM 28319 / BCRC 17069 / CCUG 31568 / BM 3577 / RP62A).